Here is a 353-residue protein sequence, read N- to C-terminus: GTPase Obg (353 aa).

Residues Met-1–Leu-159 form the Obg domain. The 174-residue stretch at Ala-160–Tyr-333 folds into the OBG-type G domain. GTP-binding positions include Gly-166–Ser-173, Phe-191–Val-195, Asp-212–Gly-215, Thr-283–Asp-286, and Ser-314–Val-316. Positions 173 and 193 each coordinate Mg(2+).

It belongs to the TRAFAC class OBG-HflX-like GTPase superfamily. OBG GTPase family. As to quaternary structure, monomer. Mg(2+) is required as a cofactor.

The protein resides in the cytoplasm. Its function is as follows. An essential GTPase which binds GTP, GDP and possibly (p)ppGpp with moderate affinity, with high nucleotide exchange rates and a fairly low GTP hydrolysis rate. Plays a role in control of the cell cycle, stress response, ribosome biogenesis and in those bacteria that undergo differentiation, in morphogenesis control. This chain is GTPase Obg, found in Anaeromyxobacter sp. (strain Fw109-5).